Reading from the N-terminus, the 748-residue chain is CCR4-NOT transcription complex subunit 10-A (748 aa).

Basic and acidic residues predominate over residues 1–17 (MAADKAGEQGAEKHEDS). Disordered stretches follow at residues 1-25 (MAAD…GISD), 184-205 (SNNK…EPFA), 483-524 (KQEN…PPSS), and 605-635 (VSLG…QMPQ). A compositionally biased stretch (low complexity) spans 185 to 200 (NNKNGKNNETNSNANN). Composition is skewed to polar residues over residues 487–509 (GSKT…VCSN) and 605–615 (VSLGVSSNEQE).

This sequence belongs to the CNOT10 family. Component of the CCR4-NOT complex. cnot10 and cnot11 form a subcomplex docked to the cnot1 scaffold.

It is found in the cytoplasm. Its subcellular location is the nucleus. In terms of biological role, component of the CCR4-NOT complex which is one of the major cellular mRNA deadenylases and is linked to various cellular processes including bulk mRNA degradation, miRNA-mediated repression, translational repression during translational initiation and general transcription regulation. Additional complex functions may be a consequence of its influence on mRNA expression. Is not required for association of CNOT7 to the CCR4-NOT complex. This chain is CCR4-NOT transcription complex subunit 10-A (cnot10-a), found in Xenopus laevis (African clawed frog).